The following is a 484-amino-acid chain: Glycogen synthase (484 aa).

ADP-alpha-D-glucose is bound at residue lysine 15.

It belongs to the glycosyltransferase 1 family. Bacterial/plant glycogen synthase subfamily.

The enzyme catalyses [(1-&gt;4)-alpha-D-glucosyl](n) + ADP-alpha-D-glucose = [(1-&gt;4)-alpha-D-glucosyl](n+1) + ADP + H(+). Its pathway is glycan biosynthesis; glycogen biosynthesis. Synthesizes alpha-1,4-glucan chains using ADP-glucose. The polypeptide is Glycogen synthase (Koribacter versatilis (strain Ellin345)).